The chain runs to 433 residues: uncharacterized protein (433 aa).

Helical transmembrane passes span 28–48, 56–76, 102–122, 126–146, 164–184, 207–227, 250–270, 304–324, 345–365, 375–395, and 406–426; these read FAALGPGILMASAAVGGSHII, IYGWQLAIIIILANLFKYPFF, IWIFFLLNVFATVINTAAVGL, AILTFVLPVQVPVPTLSFIVI, LSKLIMIALTITTVSAVIIAL, ALGFIVALMGWMPAPIEISAI, FNVGYIGTAILALVFLALGAL, GLIAFIAFMCMFGTTITVIDG, SYLNVAITFAALAGLAIIFYF, FAMIASFVSTPVFAYLNLSLV, and LLWLSLIGLMYLTSFTLLFIA.

It is found in the cell membrane. This is an uncharacterized protein from Pasteurella multocida (strain Pm70).